Consider the following 503-residue polypeptide: Probable cytosol aminopeptidase (503 aa).

Positions 270 and 275 each coordinate Mn(2+). The active site involves Lys282. Residues Asp293, Asp352, and Glu354 each coordinate Mn(2+). Arg356 is an active-site residue.

Belongs to the peptidase M17 family. Requires Mn(2+) as cofactor.

It localises to the cytoplasm. The catalysed reaction is Release of an N-terminal amino acid, Xaa-|-Yaa-, in which Xaa is preferably Leu, but may be other amino acids including Pro although not Arg or Lys, and Yaa may be Pro. Amino acid amides and methyl esters are also readily hydrolyzed, but rates on arylamides are exceedingly low.. The enzyme catalyses Release of an N-terminal amino acid, preferentially leucine, but not glutamic or aspartic acids.. Presumably involved in the processing and regular turnover of intracellular proteins. Catalyzes the removal of unsubstituted N-terminal amino acids from various peptides. The chain is Probable cytosol aminopeptidase from Salmonella arizonae (strain ATCC BAA-731 / CDC346-86 / RSK2980).